The chain runs to 476 residues: Cytochrome P450 6B5 (476 aa).

Residue C443 coordinates heme.

The protein belongs to the cytochrome P450 family. It depends on heme as a cofactor.

The protein localises to the endoplasmic reticulum membrane. It is found in the microsome membrane. It carries out the reaction an organic molecule + reduced [NADPH--hemoprotein reductase] + O2 = an alcohol + oxidized [NADPH--hemoprotein reductase] + H2O + H(+). Its function is as follows. Enables the insect to feed on furanocoumarin-producing plants and evolved as an adaptation for detoxification of xanthotoxin and other furanocoumarins. This Papilio glaucus (Eastern tiger swallowtail butterfly) protein is Cytochrome P450 6B5 (CYP6B5).